Reading from the N-terminus, the 618-residue chain is 1-deoxy-D-xylulose-5-phosphate synthase (618 aa).

Thiamine diphosphate contacts are provided by residues His74 and 115-117; that span reads GHS. Asp146 provides a ligand contact to Mg(2+). Thiamine diphosphate is bound by residues 147 to 148, Asn175, Tyr286, and Glu366; that span reads GA. Asn175 provides a ligand contact to Mg(2+).

Belongs to the transketolase family. DXPS subfamily. In terms of assembly, homodimer. Mg(2+) serves as cofactor. Requires thiamine diphosphate as cofactor.

It catalyses the reaction D-glyceraldehyde 3-phosphate + pyruvate + H(+) = 1-deoxy-D-xylulose 5-phosphate + CO2. Its pathway is metabolic intermediate biosynthesis; 1-deoxy-D-xylulose 5-phosphate biosynthesis; 1-deoxy-D-xylulose 5-phosphate from D-glyceraldehyde 3-phosphate and pyruvate: step 1/1. Functionally, catalyzes the acyloin condensation reaction between C atoms 2 and 3 of pyruvate and glyceraldehyde 3-phosphate to yield 1-deoxy-D-xylulose-5-phosphate (DXP). The chain is 1-deoxy-D-xylulose-5-phosphate synthase from Clostridium tetani (strain Massachusetts / E88).